Consider the following 127-residue polypeptide: Small ribosomal subunit protein uS11 (127 aa).

This sequence belongs to the universal ribosomal protein uS11 family. In terms of assembly, part of the 30S ribosomal subunit. Interacts with proteins S7 and S18. Binds to IF-3.

In terms of biological role, located on the platform of the 30S subunit, it bridges several disparate RNA helices of the 16S rRNA. Forms part of the Shine-Dalgarno cleft in the 70S ribosome. In Pelodictyon phaeoclathratiforme (strain DSM 5477 / BU-1), this protein is Small ribosomal subunit protein uS11.